The primary structure comprises 694 residues: Zinc finger BED domain-containing protein 5 (694 aa).

The BED-type zinc-finger motif lies at 109-165 (RKYDESYLSFGFTYFGNRDAPHAQCVLCKKILSNSSLAPSKLRRHLETKHAAYKDKD). 4 residues coordinate Zn(2+): cysteine 133, cysteine 136, histidine 153, and histidine 158.

The protein is Zinc finger BED domain-containing protein 5 (ZBED5) of Canis lupus familiaris (Dog).